A 296-amino-acid polypeptide reads, in one-letter code: MTTPVLNTDFPGLKLAARGKVRDIYDLGETLLIVTTDRISAFDVIMNEGIPHKGYVLTQISAYWFRQMEDIIKNHIISTDVTDFPKECQPYADVLAGRSMWVKKAKPLAAECIVRGYISGSGWKDYQKTGAICGIKLPEGLKESDRLPQPIFTPSTKAELGTHDENISFEEMCRICGTEISTKVRDVTLAIYEKARDLADQKGIIIADTKFEYGIYDGELIIIDECMTPDSSRFWPKESYKPGGPQPSFDKQFLRDYLETLDWGKTAPAPPLPEEIVRKTGEKYMEALVKLTGKGI.

This sequence belongs to the SAICAR synthetase family.

It carries out the reaction 5-amino-1-(5-phospho-D-ribosyl)imidazole-4-carboxylate + L-aspartate + ATP = (2S)-2-[5-amino-1-(5-phospho-beta-D-ribosyl)imidazole-4-carboxamido]succinate + ADP + phosphate + 2 H(+). It participates in purine metabolism; IMP biosynthesis via de novo pathway; 5-amino-1-(5-phospho-D-ribosyl)imidazole-4-carboxamide from 5-amino-1-(5-phospho-D-ribosyl)imidazole-4-carboxylate: step 1/2. The chain is Phosphoribosylaminoimidazole-succinocarboxamide synthase from Citrifermentans bemidjiense (strain ATCC BAA-1014 / DSM 16622 / JCM 12645 / Bem) (Geobacter bemidjiensis).